A 196-amino-acid polypeptide reads, in one-letter code: Pyroglutamyl-peptidase 1-like protein (196 aa).

Residues Glu-65, Cys-127, and His-146 contribute to the active site.

The protein belongs to the peptidase C15 family.

The sequence is that of Pyroglutamyl-peptidase 1-like protein (PGPEP1L) from Homo sapiens (Human).